The primary structure comprises 415 residues: Histidine--tRNA ligase (415 aa).

Belongs to the class-II aminoacyl-tRNA synthetase family. Homodimer.

The protein resides in the cytoplasm. The catalysed reaction is tRNA(His) + L-histidine + ATP = L-histidyl-tRNA(His) + AMP + diphosphate + H(+). This is Histidine--tRNA ligase from Rickettsia akari (strain Hartford).